We begin with the raw amino-acid sequence, 224 residues long: MMLITTSHRPTRRTRSFGHDLERVIPNSLYLTRGKKTIQELLMEAYDRGYERLLIINVWKGNPLKMTFIKVHPEDWGYLGYLYLHGVKLQREMGFKGLNPIREDMPLVITTAKRVGLDHLAFAQVFSELTTGKFVPRGDKSLLSIADRYNTDVLAVIERHPRGIVINFYRLDITKDRPVGPLINVKIWIMEDGRRWDYKEAFGIKVPPRRREFEGKRGEGKNSD.

In terms of domain architecture, Brix spans 1-196 (MMLITTSHRP…IWIMEDGRRW (196 aa)).

Functionally, probably involved in the biogenesis of the ribosome. The polypeptide is Probable Brix domain-containing ribosomal biogenesis protein (Pyrococcus horikoshii (strain ATCC 700860 / DSM 12428 / JCM 9974 / NBRC 100139 / OT-3)).